The primary structure comprises 128 residues: Aspartate 1-decarboxylase (128 aa).

The active-site Schiff-base intermediate with substrate; via pyruvic acid is the Ser-25. The residue at position 25 (Ser-25) is a Pyruvic acid (Ser). Thr-57 contributes to the substrate binding site. Tyr-58 functions as the Proton donor in the catalytic mechanism. Substrate is bound at residue 73–75 (GSA).

Belongs to the PanD family. Heterooctamer of four alpha and four beta subunits. It depends on pyruvate as a cofactor. In terms of processing, is synthesized initially as an inactive proenzyme, which is activated by self-cleavage at a specific serine bond to produce a beta-subunit with a hydroxyl group at its C-terminus and an alpha-subunit with a pyruvoyl group at its N-terminus.

The protein resides in the cytoplasm. The catalysed reaction is L-aspartate + H(+) = beta-alanine + CO2. It functions in the pathway cofactor biosynthesis; (R)-pantothenate biosynthesis; beta-alanine from L-aspartate: step 1/1. Its function is as follows. Catalyzes the pyruvoyl-dependent decarboxylation of aspartate to produce beta-alanine. The polypeptide is Aspartate 1-decarboxylase (Burkholderia cenocepacia (strain ATCC BAA-245 / DSM 16553 / LMG 16656 / NCTC 13227 / J2315 / CF5610) (Burkholderia cepacia (strain J2315))).